The primary structure comprises 333 residues: Ketol-acid reductoisomerase (NADP(+)) (333 aa).

A KARI N-terminal Rossmann domain is found at 2-182 (AKLYYEKDCN…GGARAGVLKT (181 aa)). NADP(+) is bound by residues 25 to 28 (YGSQ), S51, S53, and 83 to 86 (DEKQ). H108 is a catalytic residue. G134 is an NADP(+) binding site. A KARI C-terminal knotted domain is found at 183-328 (TFKEETETDL…KELRDMMSWS (146 aa)). Mg(2+) is bound by residues D191, E195, E227, and E231. Residue S252 coordinates substrate.

It belongs to the ketol-acid reductoisomerase family. Requires Mg(2+) as cofactor.

The catalysed reaction is (2R)-2,3-dihydroxy-3-methylbutanoate + NADP(+) = (2S)-2-acetolactate + NADPH + H(+). It carries out the reaction (2R,3R)-2,3-dihydroxy-3-methylpentanoate + NADP(+) = (S)-2-ethyl-2-hydroxy-3-oxobutanoate + NADPH + H(+). It functions in the pathway amino-acid biosynthesis; L-isoleucine biosynthesis; L-isoleucine from 2-oxobutanoate: step 2/4. It participates in amino-acid biosynthesis; L-valine biosynthesis; L-valine from pyruvate: step 2/4. Its function is as follows. Involved in the biosynthesis of branched-chain amino acids (BCAA). Catalyzes an alkyl-migration followed by a ketol-acid reduction of (S)-2-acetolactate (S2AL) to yield (R)-2,3-dihydroxy-isovalerate. In the isomerase reaction, S2AL is rearranged via a Mg-dependent methyl migration to produce 3-hydroxy-3-methyl-2-ketobutyrate (HMKB). In the reductase reaction, this 2-ketoacid undergoes a metal-dependent reduction by NADPH to yield (R)-2,3-dihydroxy-isovalerate. This is Ketol-acid reductoisomerase (NADP(+)) from Alkaliphilus metalliredigens (strain QYMF).